Here is a 262-residue protein sequence, read N- to C-terminus: Ribosome maturation factor RimP (262 aa).

Positions 197 to 262 (RELGVLPPPP…LGQTDPTEGD (66 aa)) are disordered. Over residues 223–233 (KLPKAKLKAAK) the composition is skewed to basic residues. Residues 240-254 (TKEHRLAAAERKRLG) are compositionally biased toward basic and acidic residues.

This sequence belongs to the RimP family.

It is found in the cytoplasm. In terms of biological role, required for maturation of 30S ribosomal subunits. The polypeptide is Ribosome maturation factor RimP (Rhodopseudomonas palustris (strain BisB18)).